The primary structure comprises 1064 residues: Lysine-specific demethylase 4A (1064 aa).

An N-acetylalanine modification is found at Ala-2. The region spanning 14 to 56 is the JmjN domain; that stretch reads IMTFYPTMEEFRNFSRYIAYIESQGAHRAGLAKVVPPKEWKPR. Tyr-132 lines the 2-oxoglutarate pocket. The 167-residue stretch at 142-308 folds into the JmjC domain; the sequence is EQHVDEWNIG…YGKQAVLCSC (167 aa). Positions 188 and 190 each coordinate Fe cation. Positions 198 and 206 each coordinate 2-oxoglutarate. Zn(2+)-binding residues include Cys-234 and His-240. Residue Lys-241 coordinates 2-oxoglutarate. Fe cation is bound at residue His-276. Residues Cys-306 and Cys-308 each contribute to the Zn(2+) site. Disordered stretches follow at residues 354-384, 434-489, 502-537, 549-573, and 590-643; these read LKDSGGLTPRAGSEECPEEDVEAADQGEEGD, LAPV…LDLS, SGSKKKSSSSLGSTSSQDSVSSDSETAESVSCQGQE, RGDGKAATGEPSVKKKRSAPRSISE, and NKKT…LSQL. A compositionally biased stretch (acidic residues) spans 368-382; sequence ECPEEDVEAADQGEE. The span at 460–472 shows a compositional bias: basic and acidic residues; it reads TEVKFEELKNVKL. Residues 473-482 are compositionally biased toward acidic residues; it reads EEEDEEDEPE. The span at 509-525 shows a compositional bias: low complexity; the sequence is SSSLGSTSSQDSVSSDS. The residue at position 523 (Ser-523) is a Phosphoserine. Residues 528–537 show a composition bias toward polar residues; sequence AESVSCQGQE. Residues 593 to 608 show a composition bias toward basic residues; the sequence is TKGRRQPLSKLPRHHP. An interaction with NCOR1 region spans residues 597 to 638; the sequence is RQPLSKLPRHHPLVLQECGSDDETSEQLTPEEEAEETEAWAK. Acidic residues predominate over residues 615 to 634; sequence GSDDETSEQLTPEEEAEETE. The PHD-type 1 zinc finger occupies 709–767; it reads MCFTTTGCSTDINLSTPYLEEDGTSMLVSCKKCSVRVHASCYGVPPAKASEEWMCSRCS. Residues 772 to 805 form a C2HC pre-PHD-type zinc finger; it reads EEDCCLCSLRGGALQRANDDRWVHVSCAVAILEA. A PHD-type 2 zinc finger spans residues 828 to 885; the sequence is LKCVFCKKRRKRNAGCCVQCSHGRCPTAFHVSCAQAAGVMMQPDDWPFVVFITCFRHK. 2 consecutive Tudor domains span residues 897–954 and 955–1011; these read LSIT…CLQL and GPPA…EELP.

Belongs to the JHDM3 histone demethylase family. As to quaternary structure, interacts with histone deacetylase proteins HDAC1, HDAC2 and HDAC3. Interacts with RB and NCOR1. Interacts with VRK1. It depends on Fe(2+) as a cofactor. Post-translationally, ubiquitinated by RNF8 and RNF168, leading to its degradation. Degradation promotes accessibility of H4K20me2 mark for DNA repair protein TP53BP1, which is then recruited. Also ubiquitinated by the SCF(FBXO22) complex; leading to proteasomal degradation. As to expression, widely expressed.

Its subcellular location is the nucleus. It carries out the reaction N(6),N(6),N(6)-trimethyl-L-lysyl(9)-[histone H3] + 2 2-oxoglutarate + 2 O2 = N(6)-methyl-L-lysyl(9)-[histone H3] + 2 formaldehyde + 2 succinate + 2 CO2. It catalyses the reaction N(6),N(6),N(6)-trimethyl-L-lysyl(36)-[histone H3] + 2 2-oxoglutarate + 2 O2 = N(6)-methyl-L-lysyl(36)-[histone H3] + 2 formaldehyde + 2 succinate + 2 CO2. Functionally, histone demethylase that specifically demethylates 'Lys-9' and 'Lys-36' residues of histone H3, thereby playing a central role in histone code. Does not demethylate histone H3 'Lys-4', H3 'Lys-27' nor H4 'Lys-20'. Demethylates trimethylated H3 'Lys-9' and H3 'Lys-36' residue, while it has no activity on mono- and dimethylated residues. Demethylation of Lys residue generates formaldehyde and succinate. Participates in transcriptional repression of ASCL2 and E2F-responsive promoters via the recruitment of histone deacetylases and NCOR1, respectively. This Mus musculus (Mouse) protein is Lysine-specific demethylase 4A (Kdm4a).